The primary structure comprises 71 residues: Putative membrane protein insertion efficiency factor (71 aa).

It belongs to the UPF0161 family.

Its subcellular location is the cell membrane. Could be involved in insertion of integral membrane proteins into the membrane. This chain is Putative membrane protein insertion efficiency factor, found in Desulforudis audaxviator (strain MP104C).